The sequence spans 561 residues: Putative cysteine ligase BshC (561 aa).

Positions 472 to 517 (LAQSVEKVMQSTLNQVENLKSKTIKAEKQRHNDLIAQIEKSRDNLL) form a coiled coil.

Belongs to the BshC family.

The chain is Putative cysteine ligase BshC from Chloroherpeton thalassium (strain ATCC 35110 / GB-78).